Consider the following 672-residue polypeptide: uncharacterized protein (672 aa).

Residues 1–24 form the signal peptide; that stretch reads MKTLKVLKIFIIVYISSVSLESFA. The next 2 membrane-spanning stretches (helical) occupy residues 226-246 and 254-274; these read IIGA…ALNK and ITLF…LGPL. A compositionally biased stretch (polar residues) spans 363–372; sequence SNGTSGNNKP. A disordered region spans residues 363–384; it reads SNGTSGNNKPIPNFDPDGKKDR. 4 consecutive transmembrane segments (helical) span residues 410-430, 436-456, 469-489, and 562-582; these read IILV…LYFI, CMVT…MVLF, VCIS…LLIT, and VVSI…FYYF. Basic and acidic residues predominate over residues 628 to 646; it reads HGKSSLGDKPDIGNKRKDG. The segment at 628–672 is disordered; sequence HGKSSLGDKPDIGNKRKDGAQQGEDAVNSSGGEVADLASGSGGGK.

The protein belongs to the TrbL/VirB6 family.

It localises to the cell membrane. This is an uncharacterized protein from Rickettsia prowazekii (strain Madrid E).